The following is a 56-amino-acid chain: Large ribosomal subunit protein bL32 (56 aa).

The tract at residues 1 to 34 (MAVQQNKPSRSKRGMRRAHDALKTSTISVDKTSG) is disordered.

The protein belongs to the bacterial ribosomal protein bL32 family.

This Baumannia cicadellinicola subsp. Homalodisca coagulata protein is Large ribosomal subunit protein bL32.